The following is a 471-amino-acid chain: Trigger factor (471 aa).

In terms of domain architecture, PPIase FKBP-type spans 174–261 (GDVAVVSFEG…VKDLKTRELP (88 aa)). Positions 436–446 (ETLPKTKSLNG) are enriched in polar residues. A disordered region spans residues 436–471 (ETLPKTKSLNGKPSTQGKTSQSKSKKTKTKVEKTTK). Residues 447-457 (KPSTQGKTSQS) show a composition bias toward low complexity.

Belongs to the FKBP-type PPIase family. Tig subfamily.

It localises to the cytoplasm. It catalyses the reaction [protein]-peptidylproline (omega=180) = [protein]-peptidylproline (omega=0). Involved in protein export. Acts as a chaperone by maintaining the newly synthesized protein in an open conformation. Functions as a peptidyl-prolyl cis-trans isomerase. In Prochlorococcus marinus (strain MIT 9211), this protein is Trigger factor.